The primary structure comprises 352 residues: Molybdenum import ATP-binding protein ModC (352 aa).

The ABC transporter domain maps to 1 to 229; sequence MLELNFSQTL…SVMHPWLPKE (229 aa). Position 31-38 (31-38) interacts with ATP; that stretch reads GVSGAGKT. One can recognise a Mop domain in the interval 289–352; the sequence is QTSIRNVLRA…AQVKSVSITA (64 aa).

The protein belongs to the ABC transporter superfamily. Molybdate importer (TC 3.A.1.8) family. The complex is composed of two ATP-binding proteins (ModC), two transmembrane proteins (ModB) and a solute-binding protein (ModA).

Its subcellular location is the cell inner membrane. It carries out the reaction molybdate(out) + ATP + H2O = molybdate(in) + ADP + phosphate + H(+). Functionally, part of the ABC transporter complex ModABC involved in molybdenum import. Responsible for energy coupling to the transport system. In Salmonella typhi, this protein is Molybdenum import ATP-binding protein ModC.